A 159-amino-acid polypeptide reads, in one-letter code: Glutamate-rich protein GrpA (159 aa).

In Alkalihalophilus pseudofirmus (strain ATCC BAA-2126 / JCM 17055 / OF4) (Bacillus pseudofirmus), this protein is Glutamate-rich protein GrpA (grpA).